Reading from the N-terminus, the 89-residue chain is Small ribosomal subunit protein uS14 (89 aa).

This sequence belongs to the universal ribosomal protein uS14 family. In terms of assembly, part of the 30S ribosomal subunit. Contacts proteins S3 and S10.

In terms of biological role, binds 16S rRNA, required for the assembly of 30S particles and may also be responsible for determining the conformation of the 16S rRNA at the A site. The polypeptide is Small ribosomal subunit protein uS14 (Phytoplasma australiense).